The sequence spans 82 residues: Penaeidin-3i (82 aa).

A signal peptide spans 1–19 (MRLVVCLVFLASFALVCQG). Gln20 is modified (pyrrolidone carboxylic acid). 2 disulfide bridges follow: Cys55/Cys73 and Cys67/Cys74. Position 81 is a serine amide (Ser81).

Belongs to the penaeidin family.

It localises to the cytoplasmic granule. Its function is as follows. Antibacterial and antifungal activity. Presents chitin-binding activity. The chain is Penaeidin-3i from Penaeus vannamei (Whiteleg shrimp).